Reading from the N-terminus, the 447-residue chain is Probable glycine dehydrogenase (decarboxylating) subunit 1 (447 aa).

Belongs to the GcvP family. N-terminal subunit subfamily. As to quaternary structure, the glycine cleavage system is composed of four proteins: P, T, L and H. In this organism, the P 'protein' is a heterodimer of two subunits.

It carries out the reaction N(6)-[(R)-lipoyl]-L-lysyl-[glycine-cleavage complex H protein] + glycine + H(+) = N(6)-[(R)-S(8)-aminomethyldihydrolipoyl]-L-lysyl-[glycine-cleavage complex H protein] + CO2. In terms of biological role, the glycine cleavage system catalyzes the degradation of glycine. The P protein binds the alpha-amino group of glycine through its pyridoxal phosphate cofactor; CO(2) is released and the remaining methylamine moiety is then transferred to the lipoamide cofactor of the H protein. The polypeptide is Probable glycine dehydrogenase (decarboxylating) subunit 1 (Macrococcus caseolyticus (strain JCSC5402) (Macrococcoides caseolyticum)).